A 558-amino-acid chain; its full sequence is Vanin-like protein 1 (558 aa).

Positions Met-1–Ser-22 are cleaved as a signal peptide. In terms of domain architecture, CN hydrolase spans Tyr-33–Lys-299. A glycan (N-linked (GlcNAc...) asparagine) is linked at Asn-65. Residue Glu-76 is the Proton acceptor of the active site. Residues Asn-103, Asn-120, and Asn-128 are each glycosylated (N-linked (GlcNAc...) asparagine). The active-site Proton donor is the Lys-171. Asn-180 carries N-linked (GlcNAc...) asparagine glycosylation. Cys-203 (nucleophile) is an active-site residue. Residues Asn-354 and Asn-379 are each glycosylated (N-linked (GlcNAc...) asparagine). Residue Ser-531 is the site of GPI-anchor amidated serine attachment. A propeptide spans Gly-532–Ser-558 (removed in mature form).

The protein belongs to the carbon-nitrogen hydrolase superfamily. BTD/VNN family. In terms of tissue distribution, expressed in larvae and early pupae. Expressed in third instar larvae.

The protein localises to the cell membrane. The chain is Vanin-like protein 1 from Drosophila melanogaster (Fruit fly).